The sequence spans 2090 residues: Nuclear pore complex protein Nup214 (2090 aa).

N-acetylglycine is present on Gly-2. Position 30 is a phosphoserine (Ser-30). 7 Blade repeats span residues 41-93, 94-150, 151-193, 194-239, 240-303, 304-359, and 360-404; these read LLAV…PMKF, PIHH…DAGG, MVID…PSTV, AVTS…ESDH, PVRV…ERQH, HYYL…KSDD, and SLPM…FYMI. Positions 41 to 404 are seven-bladed beta propeller; that stretch reads LLAVSNKYGL…DGVLCPFYMI (364 aa). The tract at residues 236 to 1418 is 44 X 2 AA repeats of F-G; that stretch reads ESDHPVRVLD…AVFGSLPVTS (1183 aa). Position 416 is a phosphothreonine (Thr-416). Phosphoserine is present on residues Ser-421, Ser-430, and Ser-433. The segment at 422–460 is disordered; sequence LEGERQPKSPGSTPTTPTSSQAPQKLDASAAAAPASLPP. The segment covering 429 to 441 has biased composition (low complexity); it reads KSPGSTPTTPTSS. Residues Thr-434, Thr-437, and Thr-439 each carry the phosphothreonine modification. A (Microbial infection) Binds human adenovirus 5 (HAdV-5) protein L3 (hexon) region spans residues 450 to 586; sequence SAAAAPASLP…PPSTSAVKVN (137 aa). The tract at residues 481–2076 is 11 X 5 AA approximate repeats; it reads VFSFGSSSLK…GSGTGGFSFG (1596 aa). The stretch at 484–485 is repeat 1; sequence FG. Composition is skewed to low complexity over residues 489-513 and 524-536; these read LKSSATVTGEPPSYSSGSDSSKAAP and PPSKASLAPTPAA. The tract at residues 489 to 536 is disordered; sequence LKSSATVTGEPPSYSSGSDSSKAAPGPGPSTFSFVPPSKASLAPTPAA. Copy 2 of the repeat occupies 548-549; that stretch reads FG. 2 stretches are compositionally biased toward low complexity: residues 597 to 629 and 637 to 658; these read STPVSSSQSAPPMSPFSSASKPAASGPLSHPTP and VPLKSSVLPSPSGRSAQGSSSP. Positions 597–700 are disordered; sequence STPVSSSQSA…KQGHQWKDSD (104 aa). Phosphoserine is present on residues Ser-651, Ser-657, and Ser-666. Residue Thr-670 is modified to Phosphothreonine. Ser-678 bears the Phosphoserine mark. A coiled-coil region spans residues 680 to 1209; it reads QAKSLQPAVA…VTSTPSASGQ (530 aa). Residues 691–700 show a composition bias toward basic and acidic residues; that stretch reads KQGHQWKDSD. 2 leucine-zipper regions span residues 740-768 and 861-882; these read LRTESDDLHTFLLEIKETTESLHGDISSL and LANNREIINQQRKRLNHLVDSL. Ser-760 is subject to Phosphoserine. Residues Ser-940, Ser-970, Ser-974, and Ser-989 each carry the phosphoserine modification. The interval 987–1009 is disordered; it reads TSSVSQSLESEDARTSCKDDEAV. Over residues 997 to 1007 the composition is skewed to basic and acidic residues; sequence EDARTSCKDDE. Thr-1021 bears the Phosphothreonine mark. Residues Ser-1023, Ser-1045, Ser-1056, and Ser-1081 each carry the phosphoserine modification. Positions 1128 to 1149 are enriched in polar residues; the sequence is LKNNPATPSTAMGSSVPYSTAK. The tract at residues 1128 to 1152 is disordered; sequence LKNNPATPSTAMGSSVPYSTAKTPH. Phosphothreonine is present on residues Thr-1134, Thr-1150, and Thr-1156. 2 stretches are compositionally biased toward polar residues: residues 1168-1188 and 1199-1213; these read LINSLKPSGPTPASGQLSSGD and AVTSTPSASGQFSKP. A disordered region spans residues 1168-1213; sequence LINSLKPSGPTPASGQLSSGDKASGTAKIETAVTSTPSASGQFSKP. A Phosphoserine modification is found at Ser-1181. Copy 3 of the repeat occupies 1225–1226; it reads FG. Polar residues-rich tracts occupy residues 1234 to 1254 and 1273 to 1285; these read SNFTAAQGATPSTKESSQPDA and PPSGITSASNTTP. 2 disordered regions span residues 1234-1316 and 1337-1408; these read SNFT…PPSK and LRVG…TSST. The span at 1288-1299 shows a compositional bias: low complexity; that stretch reads PAASSSRPVAPS. The span at 1301–1310 shows a compositional bias: polar residues; that stretch reads TALSTTSSKL. Thr-1312 is modified (phosphothreonine). A compositionally biased stretch (polar residues) spans 1347-1368; the sequence is KPTNKASSTSLTSTQPTKTSGV. Position 1353 is a phosphoserine (Ser-1353). Low complexity predominate over residues 1386 to 1408; it reads PPVTSSATTTSVAPPAATSTSST. An 18 X 4 AA approximate repeats region spans residues 1409–2084; it reads AVFGSLPVTS…FGSNNSSVQG (676 aa). Repeat copies occupy residues 1411-1412, 1427-1428, 1441-1442, and 1473-1474. The 11 X 3 AA approximate repeats stretch occupies residues 1427-2085; it reads FGGTSLSAGK…GSNNSSVQGF (659 aa). Residues 1438-1450 show a composition bias toward polar residues; it reads SFSFGSQQTNSTV. Positions 1438-1467 are disordered; sequence SFSFGSQQTNSTVPPSAPPPTTAATPLPTS. Low complexity-rich tracts occupy residues 1479–1489 and 1508–1527; these read SATTPSLPMSA and SEVSASAASLLEEQQSAQLP. Positions 1479-1539 are disordered; that stretch reads SATTPSLPMS…PPQTSDSVKK (61 aa). Lys-1538 is covalently cross-linked (Glycyl lysine isopeptide (Lys-Gly) (interchain with G-Cter in SUMO2)). A run of 18 repeats spans residues 1635-1636, 1674-1675, 1686-1687, 1713-1714, 1721-1722, 1726-1727, 1732-1733, 1756-1757, 1772-1773, 1786-1787, 1798-1799, 1806-1807, 1812-1813, 1819-1820, 1842-1843, 1851-1852, 1862-1863, and 1874-1875. A disordered region spans residues 1884 to 1903; sequence GFFSGLGGKPSQDAANKNPF. Tandem repeats lie at residues 1910-1911, 1922-1923, 1930-1931, 1938-1939, and 1959-1960. Phosphoserine is present on Ser-1963. Tandem repeats lie at residues 1970–1971, 1976–1977, and 1982–1983. Phosphoserine is present on Ser-1985. 11 tandem repeats follow at residues 1988-1989, 1994-1995, 2012-2013, 2024-2025, 2026-2027, 2035-2036, 2046-2047, 2056-2057, 2066-2067, 2075-2076, and 2085-2086.

As to quaternary structure, homodimer. Part of the nuclear pore complex (NPC). Interacts with NUP88. Interacts with ZFP36; this interaction increases upon lipopolysaccharide (LPS) stimulation. Interacts with DDX19. Interacts with XPO1. Interacts with XPO5. In terms of assembly, (Microbial infection) Interacts with human herpes virus 1 (HHV-1) protein UL25; this interaction might be essential to the capsid docking onto the host nuclear pore. (Microbial infection) Interacts (via N-terminus) with human adenovirus 5 (HAdV-5) protein L3 (hexon); this interaction might be essential for the release of the virus genome to the nucleus. In terms of processing, probably glycosylated as it reacts with wheat germ agglutinin (WGA). In terms of tissue distribution, expressed in thymus, spleen, bone marrow, kidney, brain and testis, but hardly in all other tissues or in whole embryos during development.

The protein resides in the nucleus. It is found in the nuclear pore complex. In terms of biological role, part of the nuclear pore complex. Has a critical role in nucleocytoplasmic transport. May serve as a docking site in the receptor-mediated import of substrates across the nuclear pore complex. Functionally, (Microbial infection) Required for capsid disassembly of the human adenovirus 5 (HadV-5) leading to release of the viral genome to the nucleus (in vitro). In Homo sapiens (Human), this protein is Nuclear pore complex protein Nup214 (NUP214).